Consider the following 155-residue polypeptide: 6,7-dimethyl-8-ribityllumazine synthase (155 aa).

Residues Phe-23, 57–59 (AFE), and 81–83 (AVI) contribute to the 5-amino-6-(D-ribitylamino)uracil site. (2S)-2-hydroxy-3-oxobutyl phosphate is bound at residue 86-87 (ST). His-89 functions as the Proton donor in the catalytic mechanism. Phe-114 is a 5-amino-6-(D-ribitylamino)uracil binding site. Arg-128 contributes to the (2S)-2-hydroxy-3-oxobutyl phosphate binding site.

It belongs to the DMRL synthase family.

The enzyme catalyses (2S)-2-hydroxy-3-oxobutyl phosphate + 5-amino-6-(D-ribitylamino)uracil = 6,7-dimethyl-8-(1-D-ribityl)lumazine + phosphate + 2 H2O + H(+). The protein operates within cofactor biosynthesis; riboflavin biosynthesis; riboflavin from 2-hydroxy-3-oxobutyl phosphate and 5-amino-6-(D-ribitylamino)uracil: step 1/2. In terms of biological role, catalyzes the formation of 6,7-dimethyl-8-ribityllumazine by condensation of 5-amino-6-(D-ribitylamino)uracil with 3,4-dihydroxy-2-butanone 4-phosphate. This is the penultimate step in the biosynthesis of riboflavin. In Trichlorobacter lovleyi (strain ATCC BAA-1151 / DSM 17278 / SZ) (Geobacter lovleyi), this protein is 6,7-dimethyl-8-ribityllumazine synthase.